Here is a 309-residue protein sequence, read N- to C-terminus: MEFKHISVLLEETIDSLNIKEDGVYVDCTLGGGGHSKEILKKLSHKGKLIGIDQDTSAIKAAKERLKDYENVIYVHNNFYNIDSILEELDIDKVDGIIMDLGVSSYQLDEASRGFSYMKDAPLDMRMNREENFSAYNVVNSYEEEELFRIFKNYGEEKFSRKIARFIVEKRTENPIETTGELVEIIRKAIPAKFQREGHPAKRTFQAIRIEVNKELQILNKAIEDSVNRLNKDGRLSIITFHSLEDRIVKVKFKELEKPCTCPPSFPICVCGKEPQIKIITKKPIEPSKEEKEINSRSRSAKLRVCRKI.

Residues 33 to 35, Asp53, Phe79, Asp100, and Gln107 each bind S-adenosyl-L-methionine; that span reads GGH.

The protein belongs to the methyltransferase superfamily. RsmH family.

Its subcellular location is the cytoplasm. The catalysed reaction is cytidine(1402) in 16S rRNA + S-adenosyl-L-methionine = N(4)-methylcytidine(1402) in 16S rRNA + S-adenosyl-L-homocysteine + H(+). Specifically methylates the N4 position of cytidine in position 1402 (C1402) of 16S rRNA. This chain is Ribosomal RNA small subunit methyltransferase H, found in Clostridium botulinum (strain Loch Maree / Type A3).